The chain runs to 539 residues: Chaperonin GroEL 1 (539 aa).

Residues 30 to 33 (TLGP), K51, 87 to 91 (DGTTT), G415, 480 to 482 (NAA), and D496 each bind ATP.

This sequence belongs to the chaperonin (HSP60) family. Forms a cylinder of 14 subunits composed of two heptameric rings stacked back-to-back. Interacts with the co-chaperonin GroES.

It localises to the cytoplasm. The enzyme catalyses ATP + H2O + a folded polypeptide = ADP + phosphate + an unfolded polypeptide.. Together with its co-chaperonin GroES, plays an essential role in assisting protein folding. The GroEL-GroES system forms a nano-cage that allows encapsulation of the non-native substrate proteins and provides a physical environment optimized to promote and accelerate protein folding. The sequence is that of Chaperonin GroEL 1 from Bradyrhizobium sp. (strain ORS 278).